The chain runs to 201 residues: Heat shock protein beta-1 (201 aa).

The residue at position 15 (Ser15) is a Phosphoserine; by PKA and PKC. A sHSP domain is found at 83–193 (ALSRQMSSGM…SETTIPVNVE (111 aa)).

It belongs to the small heat shock protein (HSP20) family. In terms of assembly, homooligomer. Homodimer; becomes monomeric upon activation. Heterooligomer.

It localises to the cytoplasm. It is found in the nucleus. The protein localises to the cytoskeleton. The protein resides in the spindle. In terms of biological role, small heat shock protein which functions as a molecular chaperone probably maintaining denatured proteins in a folding-competent state. Plays a role in stress resistance and actin organization. In Poeciliopsis lucida (Desert topminnow), this protein is Heat shock protein beta-1 (hspb1).